Reading from the N-terminus, the 250-residue chain is 5'-nucleotidase SurE (250 aa).

A divalent metal cation-binding residues include D8, D9, S39, and N91.

Belongs to the SurE nucleotidase family. A divalent metal cation is required as a cofactor.

Its subcellular location is the cytoplasm. The catalysed reaction is a ribonucleoside 5'-phosphate + H2O = a ribonucleoside + phosphate. Its function is as follows. Nucleotidase that shows phosphatase activity on nucleoside 5'-monophosphates. The chain is 5'-nucleotidase SurE from Shewanella halifaxensis (strain HAW-EB4).